The following is a 531-amino-acid chain: 2,3-bisphosphoglycerate-independent phosphoglycerate mutase (531 aa).

Mn(2+)-binding residues include D15 and S65. Residue S65 is the Phosphoserine intermediate of the active site. Residues H126, 155 to 156 (RD), R187, R193, 257 to 260 (RPDR), and K330 contribute to the substrate site. Mn(2+) contacts are provided by D397, H401, D438, H439, and H456.

It belongs to the BPG-independent phosphoglycerate mutase family. Monomer. Requires Mn(2+) as cofactor.

It carries out the reaction (2R)-2-phosphoglycerate = (2R)-3-phosphoglycerate. It functions in the pathway carbohydrate degradation; glycolysis; pyruvate from D-glyceraldehyde 3-phosphate: step 3/5. Its function is as follows. Catalyzes the interconversion of 2-phosphoglycerate and 3-phosphoglycerate. This chain is 2,3-bisphosphoglycerate-independent phosphoglycerate mutase, found in Thermosynechococcus vestitus (strain NIES-2133 / IAM M-273 / BP-1).